A 376-amino-acid chain; its full sequence is MHLSQIVLYLSLLIALGPVVLSDQEAHQQPSVSTPVDTDQCATCEVRQQIKTMRLNAIKSQILSKLRMKEAPNISREIVKQLLPKAPPLQQLLDQYDVLGDDNREEVLEDDDEHATTETIVMVATEPDPAVQVDGQPKCCFFSITQKFQASRVVRAQLWVHLRPSEEVTTVFLQISRLIPVTDGNRHIRSRSLKIDVNPGPASWQSIDVKQVLTVWLRQPETNWGIEINAFDSRGNDLAVTSAEPGEEGLQPFMEVKISEGPRRARRDSGLDCDENSPESRCCRYPLTVDFEDFGWDWIIAPKRYKANYCSGECEYMHLQKYPHTHLVNKANPRGTAGPCCTPTKMSPINMLYFNRKEQIIYGKIPSMVVDRCGCS.

The first 22 residues, 1 to 22 (MHLSQIVLYLSLLIALGPVVLS), serve as a signal peptide directing secretion. The propeptide occupies 23–267 (DQEAHQQPSV…ISEGPRRARR (245 aa)). 4 disulfides stabilise this stretch: cysteine 273–cysteine 283, cysteine 282–cysteine 341, cysteine 310–cysteine 373, and cysteine 314–cysteine 375.

It belongs to the TGF-beta family. In terms of assembly, homodimer; disulfide-linked. As to expression, highly expressed in muscle. Also expressed in other tissues such as eye, gill, ovary, gut and brain. Very low level detected in testis. Not expressed in liver, kidney, stomach or heart.

The protein localises to the secreted. Its function is as follows. Acts specifically as a negative regulator of skeletal muscle growth. The chain is Growth/differentiation factor 8 from Oreochromis mossambicus (Mozambique tilapia).